The following is a 406-amino-acid chain: 5-cytosine rRNA methyltransferase NSUN4 (406 aa).

Positions 207, 208, 209, 226, 231, 259, 260, and 277 each coordinate S-adenosyl-L-methionine. Cysteine 332 serves as the catalytic Nucleophile.

The protein belongs to the class I-like SAM-binding methyltransferase superfamily. RsmB/NOP family.

It is found in the mitochondrion. It carries out the reaction a cytidine in rRNA + S-adenosyl-L-methionine = a 5-methylcytidine in rRNA + S-adenosyl-L-homocysteine + H(+). The enzyme catalyses a cytidine in mRNA + S-adenosyl-L-methionine = a 5-methylcytidine in mRNA + S-adenosyl-L-homocysteine + H(+). Functionally, involved in mitochondrial ribosome large subunit biogenesis. Mitochondrial RNA cytosine C(5)-methyltransferase that methylates cytosine to 5-methylcytosine (m5C) in various RNAs, such as rRNAs, mRNAs and some long non-coding RNAs (lncRNAs). Involved in mitochondrial ribosome small subunit (SSU) maturation by catalyzing methylation of mitochondrial 12S rRNA. In Xenopus tropicalis (Western clawed frog), this protein is 5-cytosine rRNA methyltransferase NSUN4 (nsun4).